Reading from the N-terminus, the 626-residue chain is Glucoamylase (626 aa).

The signal sequence occupies residues 1–19 (MHLVSSLLVVGAAFQAVLG). Residues 20 to 35 (LPDPLHEKRHSDIIKR) constitute a propeptide that is removed on maturation. An N-linked (GlcNAc...) asparagine glycan is attached at N106. Residue W155 participates in substrate binding. N206 carries N-linked (GlcNAc...) asparagine glycosylation. The active-site Proton acceptor is the D211. E214 serves as the catalytic Proton donor. The N-linked (GlcNAc...) asparagine glycan is linked to N217. The CBM20 domain maps to 520–626 (CAADHEVLVT…STATLDDTWR (107 aa)).

This sequence belongs to the glycosyl hydrolase 15 family.

It catalyses the reaction Hydrolysis of terminal (1-&gt;4)-linked alpha-D-glucose residues successively from non-reducing ends of the chains with release of beta-D-glucose.. This chain is Glucoamylase (gla-1), found in Neurospora crassa (strain ATCC 24698 / 74-OR23-1A / CBS 708.71 / DSM 1257 / FGSC 987).